Reading from the N-terminus, the 804-residue chain is Leucine--tRNA ligase (804 aa).

The 'HIGH' region signature appears at 40 to 51 (PYPSGQGLHVGH). The 'KMSKS' region signature appears at 576–580 (KMSKS). ATP is bound at residue K579.

This sequence belongs to the class-I aminoacyl-tRNA synthetase family.

It is found in the cytoplasm. It carries out the reaction tRNA(Leu) + L-leucine + ATP = L-leucyl-tRNA(Leu) + AMP + diphosphate. In Oceanobacillus iheyensis (strain DSM 14371 / CIP 107618 / JCM 11309 / KCTC 3954 / HTE831), this protein is Leucine--tRNA ligase.